Here is a 1324-residue protein sequence, read N- to C-terminus: RNA2 polyprotein (1324 aa).

The protein belongs to the nepoviruses RNA2 polyprotein family. Post-translationally, specific enzymatic cleavages in vivo by the P1 encoded 3C-like protease yield mature proteins. The N-terminus of the coat protein is blocked.

Its subcellular location is the host cell junction. It localises to the host plasmodesma. It is found in the host cytoplasm. The protein resides in the host nucleus. The protein localises to the virion. In terms of biological role, implicated in RNA2 replication. Could also be required for nematode transmission of the virus. Functionally, transports viral genome to neighboring plant cells directly through plasmosdesmata, without any budding. The movement protein allows efficient cell to cell propagation, by bypassing the host cell wall barrier. Acts by forming a tubular structure at the host plasmodesmata, enlarging it enough to allow free passage of virion capsids. This chain is RNA2 polyprotein, found in Apium graveolens (Celery).